Reading from the N-terminus, the 911-residue chain is Androgen receptor (911 aa).

Residues 1-549 (MEVQLGLGRV…PIDYYFPPQK (549 aa)) form a modulating region. The interval 1–578 (MEVQLGLGRV…GSCKVFFKRA (578 aa)) is interaction with ZNF318. Disordered regions lie at residues 35 to 164 (QNPG…LSLL) and 192 to 225 (QQQQ…YLGG). Over residues 44–88 (AASAAPPGASLLLQQQQQQQQQQQQQQQQQQQQQQETSPRQQQQQ) the composition is skewed to low complexity. Serine 81 bears the Phosphoserine; by CDK9 mark. A Phosphoserine modification is found at serine 93. Over residues 192-214 (QQQQQEAVSEGSSSGRAREASGA) the composition is skewed to low complexity. Positions 215–225 (PTSSKDNYLGG) are enriched in polar residues. A Phosphotyrosine; by CSK modification is found at tyrosine 222. Residue serine 255 is modified to Phosphoserine. Tyrosine 266 is subject to Phosphotyrosine; by CSK and TNK2. A phosphotyrosine; by CSK mark is found at tyrosine 306, tyrosine 345, tyrosine 356, and tyrosine 361. Phosphotyrosine; by CSK and TNK2 is present on tyrosine 362. Lysine 385 is covalently cross-linked (Glycyl lysine isopeptide (Lys-Gly) (interchain with G-Cter in SUMO)). Tyrosine 392 carries the post-translational modification Phosphotyrosine; by CSK. Residue lysine 512 forms a Glycyl lysine isopeptide (Lys-Gly) (interchain with G-Cter in SUMO) linkage. A phosphotyrosine; by CSK mark is found at tyrosine 526 and tyrosine 543. An interaction with LPXN region spans residues 543 to 910 (YYFPPQKTCL…GKVKPIYFHT (368 aa)). 2 consecutive NR C4-type zinc fingers follow at residues 551 to 571 (CLIC…CGSC) and 587 to 611 (CASR…LRKC). Positions 551–623 (CLICGDEASG…AGMTLGARKL (73 aa)) form a DNA-binding region, nuclear receptor. The tract at residues 563–653 (YGALTCGSCK…TEETTQKLTV (91 aa)) is interaction with HIPK3. The tract at residues 583-910 (QKYLCASRND…GKVKPIYFHT (328 aa)) is interaction with CCAR1. Positions 616 to 910 (MTLGARKLKK…GKVKPIYFHT (295 aa)) are interaction with KAT7. Serine 642 carries the phosphoserine; by STK4/MST1 modification. One can recognise an NR LBD domain in the interval 660 to 891 (ECQPIFLNVL…DFPEMMAEII (232 aa)). 2 residues coordinate 17beta-hydroxy-5alpha-androstan-3-one: asparagine 697 and arginine 744. Glycyl lysine isopeptide (Lys-Gly) (interchain with G-Cter in ubiquitin) cross-links involve residues lysine 837 and lysine 839. Threonine 869 is a 17beta-hydroxy-5alpha-androstan-3-one binding site. Tyrosine 907 is subject to Phosphotyrosine; by CSK.

It belongs to the nuclear hormone receptor family. NR3 subfamily. In terms of assembly, binds DNA as a homodimer. Part of a ternary complex containing AR, EFCAB6/DJBP and PARK7. Interacts with HIPK3 and NR0B2 in the presence of androgen. The ligand binding domain interacts with KAT7/HBO1 in the presence of dihydrotestosterone. Interacts with EFCAB6/DJBP, PQBP1, RANBP9, RBAK, SPDEF, SRA1, TGFB1I1 and RREB1. Interacts with ZMIZ1/ZIMP10 and ZMIZ2/ZMIP7 which both enhance its transactivation activity. Interacts with SLC30A9 and RAD54L2/ARIP4. Interacts with MACROD1 (via macro domain). Interacts via the ligand-binding domain with LXXLL and FXXLF motifs from NCOA1, NCOA2, NCOA3 and MAGEA11. Interacts (via nuclear receptor DNA binding domain and nuclear receptor ligand binding domain) with NCOA4. The AR N-terminal poly-Gln region binds Ran resulting in enhancement of AR-mediated transactivation. Ran-binding decreases as the poly-Gln length increases. Interacts with HIP1 (via coiled coil domain). Interacts (via ligand-binding domain) with TRIM68. Interacts with TNK2. Interacts with USP26. Interacts with RNF6. Interacts (regulated by RNF6 probably through polyubiquitination) with RNF14; regulates AR transcriptional activity. Interacts with PRMT2 and TRIM24. Interacts with RACK1. Interacts with RANBP10; this interaction enhances dihydrotestosterone-induced AR transcriptional activity. Interacts with PRPF6 in a hormone-independent way; this interaction enhances dihydrotestosterone-induced AR transcriptional activity. Interacts with STK4/MST1. Interacts with ZIPK/DAPK3. Interacts with LPXN. Interacts with MAK. Part of a complex containing AR, MAK and NCOA3. Interacts with CRY1. Interacts with CCAR1 and GATA2. Interacts with ZNF318. Interacts with BUD31. Interacts with ARID4A. Interacts with ARID4B. Interacts (via NR LBD domain) with ZBTB7A; the interaction is direct and androgen-dependent. Interacts with NCOR1. Interacts with NCOR2. Interacts with CRY2 in a ligand-dependent manner. Post-translationally, phosphorylated in prostate cancer cells in response to several growth factors including EGF. Phosphorylation is induced by c-Src kinase (CSK). Tyr-526 is one of the major phosphorylation sites and an increase in phosphorylation and Src kinase activity is associated with prostate cancer progression. Phosphorylation by TNK2 enhances the DNA-binding and transcriptional activity. Phosphorylation at Ser-81 by CDK9 regulates AR promoter selectivity and cell growth. In terms of processing, sumoylated on Lys-385 (major) and Lys-512. Ubiquitinated. Deubiquitinated by USP26. 'Lys-6' and 'Lys-27'-linked polyubiquitination by RNF6 modulates AR transcriptional activity and specificity. Palmitoylated by ZDHHC7 and ZDHHC21. Palmitoylation is required for plasma membrane targeting and for rapid intracellular signaling via ERK and AKT kinases and cAMP generation.

It localises to the nucleus. It is found in the cytoplasm. Its function is as follows. Steroid hormone receptors are ligand-activated transcription factors that regulate eukaryotic gene expression and affect cellular proliferation and differentiation in target tissues. Transcription factor activity is modulated by bound coactivator and corepressor proteins like ZBTB7A that recruits NCOR1 and NCOR2 to the androgen response elements/ARE on target genes, negatively regulating androgen receptor signaling and androgen-induced cell proliferation. Transcription activation is also down-regulated by NR0B2. Activated, but not phosphorylated, by HIPK3 and ZIPK/DAPK3. This chain is Androgen receptor (AR), found in Pan troglodytes (Chimpanzee).